The sequence spans 431 residues: Peroxisomal biogenesis factor 3 (431 aa).

Residues 1-10 lie on the Peroxisomal side of the membrane; that stretch reads MDFFRRHQKK. Residues 11–28 form a helical membrane-spanning segment; it reads VLALVGVALSSYLFIDYV. Residues 29 to 431 are Cytoplasmic-facing; that stretch reads KKKFFEIQGR…VVYSSFDWAL (403 aa). Residues 95-126 form a disordered region; that stretch reads TDRVLALESSTSSSATAQTVPTMTSGATEEGE. The segment covering 112 to 121 has biased composition (polar residues); that stretch reads QTVPTMTSGA.

It belongs to the peroxin-3 family.

It is found in the peroxisome membrane. Involved in peroxisome biosynthesis. Seems to directly or indirectly sequesters components of the peroxisome biogenesis machinery. This is Peroxisomal biogenesis factor 3 (PEX3) from Yarrowia lipolytica (strain CLIB 122 / E 150) (Yeast).